The following is a 304-amino-acid chain: Acetyl-coenzyme A carboxylase carboxyl transferase subunit beta (304 aa).

Positions 25 to 294 (VWTKCDSCGQ…PSVVESKADT (270 aa)) constitute a CoA carboxyltransferase N-terminal domain. Zn(2+) is bound by residues cysteine 29, cysteine 32, cysteine 48, and cysteine 51. Residues 29 to 51 (CDSCGQVLYRAELERNLEVCPKC) form a C4-type zinc finger.

It belongs to the AccD/PCCB family. As to quaternary structure, acetyl-CoA carboxylase is a heterohexamer composed of biotin carboxyl carrier protein (AccB), biotin carboxylase (AccC) and two subunits each of ACCase subunit alpha (AccA) and ACCase subunit beta (AccD). It depends on Zn(2+) as a cofactor.

The protein resides in the cytoplasm. It carries out the reaction N(6)-carboxybiotinyl-L-lysyl-[protein] + acetyl-CoA = N(6)-biotinyl-L-lysyl-[protein] + malonyl-CoA. It participates in lipid metabolism; malonyl-CoA biosynthesis; malonyl-CoA from acetyl-CoA: step 1/1. Component of the acetyl coenzyme A carboxylase (ACC) complex. Biotin carboxylase (BC) catalyzes the carboxylation of biotin on its carrier protein (BCCP) and then the CO(2) group is transferred by the transcarboxylase to acetyl-CoA to form malonyl-CoA. This chain is Acetyl-coenzyme A carboxylase carboxyl transferase subunit beta, found in Yersinia pestis bv. Antiqua (strain Nepal516).